Reading from the N-terminus, the 352-residue chain is tRNA pseudouridine synthase D (352 aa).

Residue Asp-81 is the Nucleophile of the active site. A TRUD domain is found at 157 to 303 (GVPNYFGTQR…MDHERRILRL (147 aa)).

This sequence belongs to the pseudouridine synthase TruD family.

The enzyme catalyses uridine(13) in tRNA = pseudouridine(13) in tRNA. Functionally, responsible for synthesis of pseudouridine from uracil-13 in transfer RNAs. This is tRNA pseudouridine synthase D from Pseudomonas putida (strain ATCC 700007 / DSM 6899 / JCM 31910 / BCRC 17059 / LMG 24140 / F1).